The sequence spans 334 residues: Aromatic O-demethylase, reductase subunit (334 aa).

The 2Fe-2S ferredoxin-type domain maps to methionine 1–alanine 91. The [2Fe-2S] cluster site is built by cysteine 35, cysteine 40, cysteine 43, and cysteine 75. In terms of domain architecture, FAD-binding FR-type spans leucine 98–proline 198. Residues arginine 145–serine 148, histidine 162–arginine 164, valine 170–threonine 172, threonine 215, phenylalanine 330, and serine 334 contribute to the FAD site.

In terms of assembly, monomer. Forms a heterodimer with GcoA. FAD is required as a cofactor. Requires [2Fe-2S] cluster as cofactor.

It catalyses the reaction 2 oxidized [cytochrome P450] + NADH = 2 reduced [cytochrome P450] + NAD(+) + H(+). The protein operates within aromatic compound metabolism. Its function is as follows. Part of a two-component P450 system that efficiently O-demethylates diverse aromatic substrates such as guaiacol and a wide variety of lignin-derived monomers. Is likely involved in lignin degradation, allowing Amycolatopsis sp. ATCC 39116 to catabolize plant biomass. GcoB transfers electrons from NADH to the cytochrome P450 subunit GcoA. Highly prefers NADH over NADPH as the electron donor. The sequence is that of Aromatic O-demethylase, reductase subunit from Amycolatopsis sp. (strain ATCC 39116 / 75iv2).